Consider the following 539-residue polypeptide: Probable 1,4-beta-D-glucan cellobiohydrolase B (539 aa).

The N-terminal stretch at 1–26 (MLPSTISYRIYKNALFFAALFGAVQA) is a signal peptide. The catalytic stretch occupies residues 27–461 (QKVGTSKAEV…SNIKVGPIGS (435 aa)). Asparagine 90 is a glycosylation site (N-linked (GlcNAc...) asparagine). The Nucleophile role is filled by glutamate 238. Catalysis depends on glutamate 243, which acts as the Proton donor. N-linked (GlcNAc...) asparagine glycans are attached at residues asparagine 296 and asparagine 495. The thr-rich linker stretch occupies residues 462-503 (TFNSGGSNPGGSTTTTKPATSTTTTKATTTATTNTTGPTGTG). The span at 462-503 (TFNSGGSNPGGSTTTTKPATSTTTTKATTTATTNTTGPTGTG) shows a compositional bias: low complexity. The segment at 462–504 (TFNSGGSNPGGSTTTTKPATSTTTTKATTTATTNTTGPTGTGV) is disordered. Residues 503-539 (GVAQPWAQCGGIGYSGPTQCAAPYTCTKQNDYYSQCL) enclose the CBM1 domain. 2 disulfide bridges follow: cysteine 511-cysteine 528 and cysteine 522-cysteine 538.

This sequence belongs to the glycosyl hydrolase 7 (cellulase C) family.

The protein resides in the secreted. The catalysed reaction is Hydrolysis of (1-&gt;4)-beta-D-glucosidic linkages in cellulose and cellotetraose, releasing cellobiose from the non-reducing ends of the chains.. Its function is as follows. The biological conversion of cellulose to glucose generally requires three types of hydrolytic enzymes: (1) Endoglucanases which cut internal beta-1,4-glucosidic bonds; (2) Exocellobiohydrolases that cut the disaccharide cellobiose from the non-reducing end of the cellulose polymer chain; (3) Beta-1,4-glucosidases which hydrolyze the cellobiose and other short cello-oligosaccharides to glucose. In Aspergillus clavatus (strain ATCC 1007 / CBS 513.65 / DSM 816 / NCTC 3887 / NRRL 1 / QM 1276 / 107), this protein is Probable 1,4-beta-D-glucan cellobiohydrolase B (cbhB).